The chain runs to 205 residues: Cytochrome bo(3) ubiquinol oxidase subunit 3 (205 aa).

The Cytoplasmic segment spans residues 1 to 26 (MIENKFNNTILNSNSSTHDKISETKK). Residues 27 to 47 (LFGLWIYLMSDCIMFAVLFAV) form a helical membrane-spanning segment. The Extracellular segment spans residues 48–69 (YAIVSSNISINLISNKIFNLSS). Residues 70-90 (ILLETFLLLLSSLSCGFVVIA) traverse the membrane as a helical segment. At 91 to 97 (MNQKRIK) the chain is on the cytoplasmic side. Residues 98-118 (MIYSFLTITFIFGLIFLLMEV) traverse the membrane as a helical segment. Residues 119 to 138 (HEFYELIIENFGPDKNAFFS) are Extracellular-facing. The helical transmembrane segment at 139 to 159 (IFFTLVATHGVHIFFGLILIL) threads the bilayer. The Cytoplasmic segment spans residues 160–177 (SILYQIKKLGLTNSIRTR). The chain crosses the membrane as a helical span at residues 178–198 (ILCFSVFWHFLDIIWICVFTF). The Extracellular segment spans residues 199–205 (VYLNGAI).

It belongs to the cytochrome c oxidase subunit 3 family. Heterooctamer of two A chains, two B chains, two C chains and two D chains.

Its subcellular location is the cell membrane. In terms of biological role, cytochrome bo(3) ubiquinol terminal oxidase is the component of the aerobic respiratory chain of E.coli that predominates when cells are grown at high aeration. Has proton pump activity across the membrane in addition to electron transfer, pumping 2 protons/electron. The chain is Cytochrome bo(3) ubiquinol oxidase subunit 3 (cyoC) from Buchnera aphidicola subsp. Acyrthosiphon pisum (strain APS) (Acyrthosiphon pisum symbiotic bacterium).